We begin with the raw amino-acid sequence, 477 residues long: Cysteine--tRNA ligase (477 aa).

A Zn(2+)-binding site is contributed by cysteine 28. The short motif at 30-40 is the 'HIGH' region element; sequence PTVYDYAHIGN. The Zn(2+) site is built by cysteine 213, histidine 238, and glutamate 242. The short motif at 270–274 is the 'KMSKS' region element; it reads KMSKS. Lysine 273 is a binding site for ATP.

The protein belongs to the class-I aminoacyl-tRNA synthetase family. Monomer. Zn(2+) serves as cofactor.

Its subcellular location is the cytoplasm. The enzyme catalyses tRNA(Cys) + L-cysteine + ATP = L-cysteinyl-tRNA(Cys) + AMP + diphosphate. This Chlamydia trachomatis serovar A (strain ATCC VR-571B / DSM 19440 / HAR-13) protein is Cysteine--tRNA ligase.